Consider the following 79-residue polypeptide: Small ribosomal subunit protein bS18 (79 aa).

Belongs to the bacterial ribosomal protein bS18 family. In terms of assembly, part of the 30S ribosomal subunit. Forms a tight heterodimer with protein bS6.

In terms of biological role, binds as a heterodimer with protein bS6 to the central domain of the 16S rRNA, where it helps stabilize the platform of the 30S subunit. The polypeptide is Small ribosomal subunit protein bS18 (Streptococcus pyogenes serotype M5 (strain Manfredo)).